Reading from the N-terminus, the 104-residue chain is Matrix Gla protein (104 aa).

The first 19 residues, M1–C19, serve as a signal peptide directing secretion. E21 bears the 4-carboxyglutamate mark. 3 positions are modified to phosphoserine: S22, S25, and S28. Positions R51–R97 constitute a Gla domain. 3 positions are modified to 4-carboxyglutamate: E60, E67, and E71. C73 and C79 are disulfide-bonded.

This sequence belongs to the osteocalcin/matrix Gla protein family. Post-translationally, requires vitamin K-dependent gamma-carboxylation for its function.

The protein localises to the secreted. In terms of biological role, associates with the organic matrix of bone and cartilage. Thought to act as an inhibitor of bone formation. The polypeptide is Matrix Gla protein (Mgp) (Mus musculus (Mouse)).